A 309-amino-acid chain; its full sequence is MADLKAILDSIYTDILPRVGEGKVADYIPELAKVDPRQFGMAIVTVDGKVYRVGDADIAFSIQSISKVFMLTLALGKVGEGLWKRVGREPSGSAFNSIVQLEHESGIPRNPFINAGAIAVTDVVMAGHAPREAIGELLRFVRYLADDESITIDDKVARSETQTGYRNVALANFMRAYRNLDHPVDHVLGVYFHQCALSMSCEQLARAGLFLAARGSNPMTGHSVVSPKRARRINALMLTCGHYDGSGDFAYHVGLPGKSGVGGGIFAVAPGIASIAVWSPGLNKVGNSQLGAVALEMLAARTGWSVFGD.

Substrate-binding residues include Ser64, Asn114, Glu160, Asn167, Tyr191, Tyr243, and Val261.

The protein belongs to the glutaminase family. As to quaternary structure, homotetramer.

The enzyme catalyses L-glutamine + H2O = L-glutamate + NH4(+). This is Glutaminase from Rhizobium etli (strain CIAT 652).